Reading from the N-terminus, the 225-residue chain is Small ribosomal subunit protein eS1 (225 aa).

The span at 206–216 (PVEEPAAEEVA) shows a compositional bias: acidic residues. Residues 206–225 (PVEEPAAEEVAEAPAAETQE) are disordered.

Belongs to the eukaryotic ribosomal protein eS1 family.

This chain is Small ribosomal subunit protein eS1, found in Methanococcus maripaludis (strain C5 / ATCC BAA-1333).